The primary structure comprises 147 residues: UPF0306 protein YhbP (147 aa).

This sequence belongs to the UPF0306 family.

This is UPF0306 protein YhbP from Escherichia coli O7:K1 (strain IAI39 / ExPEC).